A 489-amino-acid polypeptide reads, in one-letter code: Pre-glycoprotein polyprotein GP complex (489 aa).

A lipid anchor (N-myristoyl glycine; by host) is attached at Gly2. Over 2 to 17 (GQIVTFFQEVPHILEE) the chain is Extracellular. Residues 18–33 (VMNIVLMTLSILAILK) form a helical membrane-spanning segment. The Cytoplasmic segment spans residues 34 to 58 (GIYNVMTCGIIGLITFLFLCGRSCS). Cys57 provides a ligand contact to Zn(2+). Residues 59 to 430 (SIYKDNYEFF…QSTTPLGLVD (372 aa)) are Extracellular-facing. 6 N-linked (GlcNAc...) asparagine; by host glycosylation sites follow: Asn78, Asn88, Asn98, Asn108, Asn118, and Asn166. 6 disulfide bridges follow: Cys85/Cys229, Cys117/Cys154, Cys179/Cys210, Cys277/Cys290, Cys299/Cys308, and Cys362/Cys383. Asn222 is a glycosylation site (N-linked (GlcNAc...) asparagine; by host). N-linked (GlcNAc...) asparagine; by host glycosylation is found at Asn363, Asn371, Asn388, and Asn393. The helical transmembrane segment at 431-451 (LFVFSTSFYLISVFLHLIKIP) threads the bilayer. The Cytoplasmic portion of the chain corresponds to 452 to 489 (THRHIKGKPCPKPHRLNHMAICSCGFYKQPGLPTQWKR). The Zn(2+) site is built by His453, His455, Cys461, His465, Cys473, and Cys475.

It belongs to the arenaviridae GPC protein family. Interacts with glycoprotein G2. Part of the GP complex (GP-C) together with glycoprotein G1 and glycoprotein G2. The GP-complex interacts with protein Z, which interacts with ribonucleocapsid; these interactions may induce virion budding. As to quaternary structure, homotrimer; disulfide-linked. In pre-fusion state, G1 homotrimers bind G2 homotrimers via ionic interactions. Part of the GP complex (GP-C) together with glycoprotein G2 and the stable signal peptide. The GP-complex interacts with protein Z, which interacts with ribonucleocapsid; these interactions may induce virion budding. In terms of assembly, homotrimer. Interacts with the stable signal peptide. In pre-fusion state, G2 homotrimers bind G1 homotrimers via ionic interactions. Part of the GP complex (GP-C) together with glycoprotein G1 and the stable signal peptide. Acidification in the endosome triggers rearrangements, which ultimately leads to a 6 helix bundle formed by the two heptad repeat domains (HR1 and HR2) in post-fusion state. The GP-complex interacts with protein Z, which interacts with ribonucleocapsid; these interactions may induce virion budding. Specific enzymatic cleavages in vivo yield mature proteins. GP-C polyprotein is cleaved in the endoplasmic reticulum by the host protease MBTPS1. Only cleaved glycoprotein is incorporated into virions. In terms of processing, the SSP remains stably associated with the GP complex following cleavage by signal peptidase and plays crucial roles in the trafficking of GP through the secretory pathway. Post-translationally, myristoylation is necessary for GP2-mediated fusion activity.

Its subcellular location is the virion membrane. It localises to the host endoplasmic reticulum membrane. The protein resides in the host Golgi apparatus membrane. The protein localises to the host cell membrane. In terms of biological role, functions as a cleaved signal peptide that is retained as the third component of the GP complex (GP-C). Helps to stabilize the spike complex in its native conformation. The SSP is required for efficient glycoprotein expression, post-translational maturation cleavage of G1 and G2, glycoprotein transport to the cell surface plasma membrane, formation of infectious virus particles, and acid pH-dependent glycoprotein-mediated cell fusion. Functionally, forms the virion spikes together with glycoprotein G2. The glycoprotein spike trimers are connected to the underlying matrix. Interacts with the host receptor leading to virus endocytosis. Forms the virion spikes together with glycoprotein G1. The glycoprotein spike trimers are connected to the underlying matrix. Class I viral fusion protein that directs fusion of viral and host endosomal membranes, leading to delivery of the nucleocapsid into the cytoplasm. Membrane fusion is mediated by irreversible conformational changes induced by acidification. The protein is Pre-glycoprotein polyprotein GP complex of Mastomys natalensis (African soft-furred rat).